Consider the following 431-residue polypeptide: Glutamate--tRNA ligase 2 (431 aa).

The 'HIGH' region signature appears at 6–16; that stretch reads PSPTGDMHIGN. The short motif at 235–239 is the 'KMSKS' region element; the sequence is KMSKR. Lys-238 contributes to the ATP binding site.

This sequence belongs to the class-I aminoacyl-tRNA synthetase family. Glutamate--tRNA ligase type 1 subfamily. As to quaternary structure, monomer.

The protein localises to the cytoplasm. The enzyme catalyses tRNA(Glu) + L-glutamate + ATP = L-glutamyl-tRNA(Glu) + AMP + diphosphate. Catalyzes the attachment of glutamate to tRNA(Glu) in a two-step reaction: glutamate is first activated by ATP to form Glu-AMP and then transferred to the acceptor end of tRNA(Glu). The chain is Glutamate--tRNA ligase 2 from Campylobacter jejuni subsp. doylei (strain ATCC BAA-1458 / RM4099 / 269.97).